Here is a 118-residue protein sequence, read N- to C-terminus: Iron-sulfur cluster assembly protein CyaY (118 aa).

The protein belongs to the frataxin family.

Its function is as follows. Involved in iron-sulfur (Fe-S) cluster assembly. May act as a regulator of Fe-S biogenesis. This chain is Iron-sulfur cluster assembly protein CyaY, found in Buchnera aphidicola subsp. Baizongia pistaciae (strain Bp).